Here is a 296-residue protein sequence, read N- to C-terminus: MGALRIDSHQHFWRYRAADYPWIGAGMGVLARDYLPDALHPLMHAQALGASIAVQARAGRDETAFLLELACDEARIAAVVGWEDLRAPQLAERVAEWRGTKLRGFRHQLQDEADVRAFVDDADFARGVAWLQANDYVYDVLVFERQLPDVQAFCARHDAHWLVLDHAGKPALAEFDRDDTALARWRAALRELAALPHVVCKLSGLVTEADWRRGLRASDLRHIEQCLDAALDAFGPQRLMFGSDWPVCLLAASYDEVASLVERWAESRLSAAERSALWGGTAARCYALPEPADARL.

The protein belongs to the metallo-dependent hydrolases superfamily. Monomer. Requires Does not require a divalent metal for activity. The purified enzyme contains Zn(2+), but the addition of chelators does not diminish the catalytic activity of the enzyme, indicating that it does not require a divalent cation for substrate turnover. as cofactor.

The enzyme catalyses L-fucono-1,5-lactone + H2O = L-fuconate + H(+). The catalysed reaction is L-fucono-1,4-lactone + H2O = L-fuconate + H(+). It carries out the reaction D-arabinono-1,4-lactone + H2O = D-arabinonate + H(+). It catalyses the reaction L-xylono-1,4-lactone + H2O = L-xylonate + H(+). The enzyme catalyses L-galactono-1,4-lactone + H2O = L-galactonate + H(+). It functions in the pathway carbohydrate degradation; L-fucose degradation. Functionally, L-fucono-1,5-lactonase involved in an L-fucose degradation pathway. Catalyzes the hydrolysis of L-fucono-1,5-lactone to L-fuconate. L-fucono-1,5-lactone is the best substrate, but the enzyme can also hydrolyze L-fucono-1,4-lactone, L-galactono-1,4-lactone D-arabinono-1,4-lactone and L-xylono-1,4-lactone. The sequence is that of L-fucono-1,5-lactonase from Burkholderia multivorans (strain ATCC 17616 / 249).